Consider the following 541-residue polypeptide: Chaperonin GroEL (541 aa).

Residues 29 to 32 (TLGP), 86 to 90 (DGTTT), glycine 413, 476 to 478 (NAA), and aspartate 492 each bind ATP.

It belongs to the chaperonin (HSP60) family. Forms a cylinder of 14 subunits composed of two heptameric rings stacked back-to-back. Interacts with the co-chaperonin GroES.

It is found in the cytoplasm. It catalyses the reaction ATP + H2O + a folded polypeptide = ADP + phosphate + an unfolded polypeptide.. Functionally, together with its co-chaperonin GroES, plays an essential role in assisting protein folding. The GroEL-GroES system forms a nano-cage that allows encapsulation of the non-native substrate proteins and provides a physical environment optimized to promote and accelerate protein folding. The chain is Chaperonin GroEL from Streptococcus equi subsp. equi (strain 4047).